Reading from the N-terminus, the 282-residue chain is Insulin-like growth factor-binding protein 7 (282 aa).

The signal sequence occupies residues 1–26 (MERPSLRALLLGAAGLLLLLLPLSSS). Residues 28–114 (SSDTCGPCEP…PGVSGVCVCK (87 aa)) enclose the IGFBP N-terminal domain. Disulfide bonds link Cys-32–Cys-57, Cys-35–Cys-59, Cys-40–Cys-60, Cys-48–Cys-63, Cys-71–Cys-87, Cys-81–Cys-111, and Cys-120–Cys-156. The Kazal-like domain maps to 105–158 (PGVSGVCVCKSRYPVCGSDGTTYPSGCQLRAASQRAESRGEKAITQVSKGTCEQ). In terms of domain architecture, Ig-like C2-type spans 160 to 264 (PSIVTPPKDI…GQASASAKIT (105 aa)). N-linked (GlcNAc...) asparagine glycosylation occurs at Asn-171. The cysteines at positions 181 and 248 are disulfide-linked. Ser-239 carries the post-translational modification Phosphoserine; by FAM20C.

In terms of assembly, may interact with VPS24/CHMP3; the relevance of such interaction however remains unclear. Interacts with CD93; this interaction plays a role in endothelial cells angiogenesis. N-glycosylated.

It localises to the secreted. Functionally, binds IGF1 and IGF2 with a relatively low affinity. Stimulates prostacyclin (PGI2) production. Stimulates cell adhesion. Acts as a ligand for CD93 to play a role in angiogenesis. This chain is Insulin-like growth factor-binding protein 7 (IGFBP7), found in Homo sapiens (Human).